The chain runs to 311 residues: Ornithine carbamoyltransferase (311 aa).

Carbamoyl phosphate contacts are provided by residues 52–55 (STRT), Q79, R103, and 129–132 (HPVQ). Residues N167, D226, and 230–231 (SM) contribute to the L-ornithine site. Carbamoyl phosphate is bound by residues 266-267 (CL) and R294.

The protein belongs to the aspartate/ornithine carbamoyltransferase superfamily. OTCase family.

It localises to the cytoplasm. The enzyme catalyses carbamoyl phosphate + L-ornithine = L-citrulline + phosphate + H(+). Its pathway is amino-acid biosynthesis; L-arginine biosynthesis; L-arginine from L-ornithine and carbamoyl phosphate: step 1/3. In terms of biological role, reversibly catalyzes the transfer of the carbamoyl group from carbamoyl phosphate (CP) to the N(epsilon) atom of ornithine (ORN) to produce L-citrulline. The chain is Ornithine carbamoyltransferase from Sorangium cellulosum (strain So ce56) (Polyangium cellulosum (strain So ce56)).